We begin with the raw amino-acid sequence, 80 residues long: Protein P9 (80 aa).

Self-associates.

The polypeptide is Protein P9 (Beta vulgaris (Sugar beet)).